The following is a 543-amino-acid chain: MFS-type transporter pyvG (543 aa).

Residues 24-71 (PPTEQQPGFQLPPPYRLAATRTQPQQQQEQEQEQEQAKPATRPPWNEP) form a disordered region. A glycan (N-linked (GlcNAc...) asparagine) is linked at Asn94. The next 12 helical transmembrane spans lie at 101–121 (LLVYLEVNLITFMVYMSVAIF), 141–161 (LGMSLYVLGYGTGPMIWSPLS), 178–198 (IFLLLSIPTAVVNNVPGFLIL), 203–223 (GFFGSPGLATGGASIADVTGL), 230–250 (LYVWAVCSIAGPAVAPVIAGF), 259–279 (WSMWEVLWAAGGCFVFLLFLP), 335–355 (PAILFTTVYIGLVYAIFYSYF), 374–394 (GLIFLGAIVGTLLVLPGYFAF), 415–435 (LVPALCGSVLVPVGLFLFAWT), 440–460 (LHWVVPTVGLVLEVAGMSLVI), 476–496 (ASLFAINDLARAYLAFAAIMW), and 512–532 (LLAGLTVGCVGGMFTLYWWGP).

This sequence belongs to the major facilitator superfamily. CAR1 family.

The protein resides in the cell membrane. MFS-type transporter; part of the gene cluster that mediates the biosynthesis of pyranoviolin A, a pyranonigrin analog with a C-3 methoxy group. May be involved in the secretion of pyranoviolin A. This is MFS-type transporter pyvG from Aspergillus violaceofuscus (strain CBS 115571).